We begin with the raw amino-acid sequence, 156 residues long: SsrA-binding protein (156 aa).

The disordered stretch occupies residues 134-156; sequence RQTLREQQDKRESLRELRERNRR.

It belongs to the SmpB family.

Its subcellular location is the cytoplasm. Functionally, required for rescue of stalled ribosomes mediated by trans-translation. Binds to transfer-messenger RNA (tmRNA), required for stable association of tmRNA with ribosomes. tmRNA and SmpB together mimic tRNA shape, replacing the anticodon stem-loop with SmpB. tmRNA is encoded by the ssrA gene; the 2 termini fold to resemble tRNA(Ala) and it encodes a 'tag peptide', a short internal open reading frame. During trans-translation Ala-aminoacylated tmRNA acts like a tRNA, entering the A-site of stalled ribosomes, displacing the stalled mRNA. The ribosome then switches to translate the ORF on the tmRNA; the nascent peptide is terminated with the 'tag peptide' encoded by the tmRNA and targeted for degradation. The ribosome is freed to recommence translation, which seems to be the essential function of trans-translation. In Paenarthrobacter aurescens (strain TC1), this protein is SsrA-binding protein.